A 375-amino-acid polypeptide reads, in one-letter code: Succinyl-diaminopimelate desuccinylase (375 aa).

Zn(2+) is bound at residue His66. Asp68 is a catalytic residue. Asp99 lines the Zn(2+) pocket. Glu133 (proton acceptor) is an active-site residue. Zn(2+) is bound by residues Glu134, Glu162, and His348.

This sequence belongs to the peptidase M20A family. DapE subfamily. In terms of assembly, homodimer. The cofactor is Zn(2+). Co(2+) is required as a cofactor.

The catalysed reaction is N-succinyl-(2S,6S)-2,6-diaminopimelate + H2O = (2S,6S)-2,6-diaminopimelate + succinate. Its pathway is amino-acid biosynthesis; L-lysine biosynthesis via DAP pathway; LL-2,6-diaminopimelate from (S)-tetrahydrodipicolinate (succinylase route): step 3/3. Catalyzes the hydrolysis of N-succinyl-L,L-diaminopimelic acid (SDAP), forming succinate and LL-2,6-diaminopimelate (DAP), an intermediate involved in the bacterial biosynthesis of lysine and meso-diaminopimelic acid, an essential component of bacterial cell walls. This is Succinyl-diaminopimelate desuccinylase from Pectobacterium atrosepticum (strain SCRI 1043 / ATCC BAA-672) (Erwinia carotovora subsp. atroseptica).